A 217-amino-acid chain; its full sequence is Protein-L-isoaspartate O-methyltransferase (217 aa).

Residue S64 is part of the active site.

This sequence belongs to the methyltransferase superfamily. L-isoaspartyl/D-aspartyl protein methyltransferase family.

It is found in the cytoplasm. The enzyme catalyses [protein]-L-isoaspartate + S-adenosyl-L-methionine = [protein]-L-isoaspartate alpha-methyl ester + S-adenosyl-L-homocysteine. Functionally, catalyzes the methyl esterification of L-isoaspartyl residues in peptides and proteins that result from spontaneous decomposition of normal L-aspartyl and L-asparaginyl residues. It plays a role in the repair and/or degradation of damaged proteins. In Rhodopseudomonas palustris (strain BisB5), this protein is Protein-L-isoaspartate O-methyltransferase.